The sequence spans 122 residues: MIQMQTILDVADNSGARRVMCIKVLGGSKRRYASVGDIIKVAVKDAVPRGRVKKGDVYNAVVVRTAKGVRRPDGALIKFDNNAAVLLNNKLEPLGTRIFGPVTRELRTERFMKIVSLAPEVL.

It belongs to the universal ribosomal protein uL14 family. In terms of assembly, part of the 50S ribosomal subunit. Forms a cluster with proteins L3 and L19. In the 70S ribosome, L14 and L19 interact and together make contacts with the 16S rRNA in bridges B5 and B8.

In terms of biological role, binds to 23S rRNA. Forms part of two intersubunit bridges in the 70S ribosome. This chain is Large ribosomal subunit protein uL14, found in Neisseria gonorrhoeae (strain ATCC 700825 / FA 1090).